The primary structure comprises 426 residues: Serine--tRNA ligase (426 aa).

Position 232-234 (232-234 (TAE)) interacts with L-serine. 263–265 (RSE) lines the ATP pocket. Residue glutamate 286 coordinates L-serine. 350 to 353 (EISS) contacts ATP. Serine 385 contributes to the L-serine binding site.

The protein belongs to the class-II aminoacyl-tRNA synthetase family. Type-1 seryl-tRNA synthetase subfamily. As to quaternary structure, homodimer. The tRNA molecule binds across the dimer.

It is found in the cytoplasm. The catalysed reaction is tRNA(Ser) + L-serine + ATP = L-seryl-tRNA(Ser) + AMP + diphosphate + H(+). It carries out the reaction tRNA(Sec) + L-serine + ATP = L-seryl-tRNA(Sec) + AMP + diphosphate + H(+). Its pathway is aminoacyl-tRNA biosynthesis; selenocysteinyl-tRNA(Sec) biosynthesis; L-seryl-tRNA(Sec) from L-serine and tRNA(Sec): step 1/1. Its function is as follows. Catalyzes the attachment of serine to tRNA(Ser). Is also able to aminoacylate tRNA(Sec) with serine, to form the misacylated tRNA L-seryl-tRNA(Sec), which will be further converted into selenocysteinyl-tRNA(Sec). The chain is Serine--tRNA ligase from Pediococcus pentosaceus (strain ATCC 25745 / CCUG 21536 / LMG 10740 / 183-1w).